The following is a 394-amino-acid chain: Phosphoglycerate kinase (394 aa).

Residues 21–23, arginine 36, 59–62, arginine 118, and arginine 151 each bind substrate; these read DFN and HLGR. Serine 183 carries the post-translational modification Phosphoserine. ATP-binding residues include lysine 201 and glycine 292. Threonine 299 is modified (phosphothreonine). ATP-binding positions include glutamate 323 and 350–353; that span reads GGDS.

This sequence belongs to the phosphoglycerate kinase family. In terms of assembly, monomer.

Its subcellular location is the cytoplasm. The catalysed reaction is (2R)-3-phosphoglycerate + ATP = (2R)-3-phospho-glyceroyl phosphate + ADP. It functions in the pathway carbohydrate degradation; glycolysis; pyruvate from D-glyceraldehyde 3-phosphate: step 2/5. The sequence is that of Phosphoglycerate kinase from Bacillus cereus (strain Q1).